The sequence spans 515 residues: GMP synthase [glutamine-hydrolyzing] (515 aa).

The 191-residue stretch at 10–200 folds into the Glutamine amidotransferase type-1 domain; sequence TIIVLDFGSQ…VFGVCGCSEG (191 aa). Cys-87 acts as the Nucleophile in catalysis. Catalysis depends on residues His-174 and Glu-176. One can recognise a GMPS ATP-PPase domain in the interval 201–390; it reads WNMENFIEVE…LGIPDEIVWR (190 aa). 228 to 234 provides a ligand contact to ATP; that stretch reads SGGVDSS.

Homodimer.

It catalyses the reaction XMP + L-glutamine + ATP + H2O = GMP + L-glutamate + AMP + diphosphate + 2 H(+). It functions in the pathway purine metabolism; GMP biosynthesis; GMP from XMP (L-Gln route): step 1/1. In terms of biological role, catalyzes the synthesis of GMP from XMP. In Bacillus anthracis (strain A0248), this protein is GMP synthase [glutamine-hydrolyzing].